The chain runs to 241 residues: Trypsin-10 (241 aa).

The N-terminal stretch at 1–13 is a signal peptide; sequence MKSLIFVLLLGAV. The propeptide at 14–19 is activation peptide; it reads FAEEDK. The region spanning 20 to 239 is the Peptidase S1 domain; that stretch reads IVGGYECTRH…LSGWVRDTMA (220 aa). 6 cysteine pairs are disulfide-bonded: Cys26–Cys155, Cys44–Cys60, Cys128–Cys228, Cys135–Cys201, Cys166–Cys180, and Cys191–Cys215. Active-site charge relay system residues include His59 and Asp103. Ser195 (charge relay system) is an active-site residue.

Belongs to the peptidase S1 family.

The protein localises to the secreted. It is found in the extracellular space. The enzyme catalyses Preferential cleavage: Arg-|-Xaa, Lys-|-Xaa.. The protein is Trypsin-10 of Gadus morhua (Atlantic cod).